The primary structure comprises 503 residues: Lysine--tRNA ligase (503 aa).

Residues Glu412 and Glu419 each coordinate Mg(2+).

It belongs to the class-II aminoacyl-tRNA synthetase family. In terms of assembly, homodimer. Requires Mg(2+) as cofactor.

The protein resides in the cytoplasm. The enzyme catalyses tRNA(Lys) + L-lysine + ATP = L-lysyl-tRNA(Lys) + AMP + diphosphate. The sequence is that of Lysine--tRNA ligase from Buchnera aphidicola subsp. Schizaphis graminum (strain Sg).